A 59-amino-acid polypeptide reads, in one-letter code: Crassipeptide cce9a (59 aa).

A propeptide spanning residues 1 to 30 (ADNHARVAGPRAVASGRYATEKAFLQMMTR) is cleaved from the precursor.

Post-translationally, contains 3 disulfide bonds. Expressed by the venom duct.

The protein localises to the secreted. Its function is as follows. Crassispirid snail peptide that induces sleep-like symptoms in young mice (12 and 14 days) and hyperactivity in older mice (16 days), when intracranially injected. The protein is Crassipeptide cce9a of Crassispira cerithina (Sea snail).